The following is a 497-amino-acid chain: Serine/threonine protein phosphatase 2A 57 kDa regulatory subunit B' epsilon isoform (497 aa).

The segment at 12-71 is disordered; the sequence is KFNKSDQHHQDNNNNNNNTSTNTVVRGSRTTTPAPSSVSNGESQTTAQSPSQTPNHPMFT. Over residues 23 to 34 the composition is skewed to low complexity; it reads NNNNNNNTSTNT. Residues 35-71 are compositionally biased toward polar residues; that stretch reads VVRGSRTTTPAPSSVSNGESQTTAQSPSQTPNHPMFT.

Belongs to the phosphatase 2A regulatory subunit B56 family. PP2A consists of a common heteromeric enzyme, composed of a catalytic subunit (subunits C), a constant regulatory subunit (subunit A), and a variety of regulatory subunits such as subunits B (the R2/B/PR55/B55, R3/B''/PR72/PR130/PR59 and R5/B'/B56 families). As to expression, expressed ubiquitously.

Its subcellular location is the cytoplasm. Functionally, the B regulatory subunit may modulate substrate selectivity and catalytic activity, and may also direct the localization of the catalytic enzyme to a particular subcellular compartment. The sequence is that of Serine/threonine protein phosphatase 2A 57 kDa regulatory subunit B' epsilon isoform (B'EPSILON) from Arabidopsis thaliana (Mouse-ear cress).